Here is a 770-residue protein sequence, read N- to C-terminus: Transducin-like enhancer protein 1 (770 aa).

The q domain stretch occupies residues 1 to 131 (MFPQSRHPTP…IIGQQQLQAQ (131 aa)). Disordered regions lie at residues 128–157 (LQAQ…GIPP) and 176–346 (HLAI…PAME). A GP domain region spans residues 132–199 (HLSHGHGPPV…RHRDRESGTS (68 aa)). Residues 146 to 157 (HPSGLQPPGIPP) are compositionally biased toward low complexity. Basic and acidic residues-rich tracts occupy residues 178–196 (AIKD…DRES) and 209–244 (RSTD…KSDD). Residues 200 to 266 (NSLLVPDSLR…SPHASPTHSP (67 aa)) form a ccN domain region. A Nuclear localization signal motif is present at residues 225 to 228 (KKRK). A Phosphoserine; by CK2 modification is found at S237. A compositionally biased stretch (low complexity) spans 255-264 (PSSPHASPTH). Phosphoserine; by CDK1 occurs at positions 257, 261, and 265. A compositionally biased stretch (basic and acidic residues) spans 265 to 281 (SPRENGIDKNRLLKKDA). Positions 267 to 450 (RENGIDKNRL…GGKPAYSFHV (184 aa)) are SP domain. Residues 282 to 297 (SGSPASTASSGSSSSL) are compositionally biased toward low complexity. Position 284 is a phosphoserine (S284). A compositionally biased stretch (basic and acidic residues) spans 298 to 308 (KSKEVSLHEKA). WD repeat units lie at residues 470–501 (GIPR…HVYT), 528–558 (NRDN…SIWD), 572–602 (SSAP…AVWD), 614–644 (GHTD…RSWD), 696–726 (LHES…NAWR), and 737–767 (KESS…TVYE).

This sequence belongs to the WD repeat Groucho/TLE family. In terms of assembly, homooligomer and heterooligomer with other family members. Binds RUNX1, RUNX3, FOXA2, KDM6A, UTY, histone H3, HESX1, ESRRG and the NF-kappa-B subunit RELA. Interacts with HES1 (via WRPW motif). Binds TCF7, LEF1, TCF7L1 and TCF7L2. Interacts with SIX3. Interacts with EFNB1. Interacts with TLE4. Interacts with FOXG1/BF-1; the interaction is inhibited by TLE6/GRG6. Post-translationally, phosphorylated, probably by CDK1. The degree of phosphorylation varies throughout the cell cycle, and is highest at the G2/M transition. Becomes hyperphosphorylated in response to cell differentiation and interaction with HES1 or RUNX1. In terms of processing, ubiquitinated by XIAP/BIRC4. In terms of tissue distribution, highly expressed in liver and lung. Detected at slightly lower levels in heart, brain, kidney and testis. Detected in fetal and adult stomach and small intestine, in adult ileum, duodenum and colon. Expressed in bone marrow-derived macrophages. As to expression, most abundant at the base of the crypts of Lieberkuhn in the small intestine.

It localises to the nucleus. It is found in the cytoplasm. Its function is as follows. Transcriptional corepressor that binds to a number of transcription factors. Inhibits NF-kappa-B-regulated gene expression. Inhibits the transcriptional activation mediated by FOXA2, and by CTNNB1 and TCF family members in Wnt signaling. Enhances FOXG1/BF-1- and HES1-mediated transcriptional repression. The effects of full-length TLE family members may be modulated by association with dominant-negative AES. Unusual function as coactivator for ESRRG. The sequence is that of Transducin-like enhancer protein 1 (Tle1) from Mus musculus (Mouse).